Reading from the N-terminus, the 568-residue chain is Protein yellow (568 aa).

A signal peptide spans 1–28 (MHAQDKGGVLPGLSLLLIAVAMVCPSQA). 2 N-linked (GlcNAc...) asparagine glycosylation sites follow: Asn151 and Asn222.

It belongs to the major royal jelly protein family.

It is found in the secreted. Its function is as follows. Controls the pigmentation pattern of the adult cuticle and larval mouth parts. This Drosophila guanche (Fruit fly) protein is Protein yellow (y).